The sequence spans 441 residues: N-acetylmuramyl-L-alanine amidase (441 aa).

The first 25 residues, 1-25 (MKTKTLFIFSAILTLSIFAPNETFA), serve as a signal peptide directing secretion.

Belongs to the peptidase S12 family.

It carries out the reaction Hydrolyzes the link between N-acetylmuramoyl residues and L-amino acid residues in certain cell-wall glycopeptides.. It functions in the pathway cell wall biogenesis; peptidoglycan recycling. Its function is as follows. Involved in muropeptide recycling. Hydrolyzes the amide bond between N-acetylmuramic acid (MurNAc) and the L-alanine residue of the stem peptide. Cannot hydrolyze muropeptides containing N-acetylglucosamine (GlcNAc) at the non-reducing end. The protein is N-acetylmuramyl-L-alanine amidase of Bacillus subtilis (strain 168).